Here is a 284-residue protein sequence, read N- to C-terminus: Probable palmitoyltransferase ZDHHC24 (284 aa).

Over 1-18 (MGESWAARGAEGAPARMP) the chain is Cytoplasmic. Residues 19-39 (LVLTALWAAVVVLELAYVMVL) form a helical membrane-spanning segment. Residues 40 to 52 (GPGPPPLGPLARA) lie on the Extracellular side of the membrane. Residues 53 to 73 (LQLALAAYQLLNLLGNVVLFL) traverse the membrane as a helical segment. Over 74–137 (RSDPSIRGVM…GCCVGFHNYR (64 aa)) the chain is Cytoplasmic. A DHHC domain is found at 94–144 (AYCYQCQSQVPPRSGHCSACRVCILRRDHHCRLLGCCVGFHNYRPFLCLLL). Cys-124 (S-palmitoyl cysteine intermediate) is an active-site residue. A helical membrane pass occupies residues 138–158 (PFLCLLLHSAGVLLHISVLLG). Over 159 to 166 (PALSALLQ) the chain is Extracellular. Residues 167 to 187 (AHSALYTVALLLLPWLMLLTG) form a helical membrane-spanning segment. Residues 188–195 (KVSLAQFA) lie on the Cytoplasmic side of the membrane. Residues 196 to 216 (LAFVVDTCVAGALLCGAGLLF) form a helical membrane-spanning segment. Over 217–284 (HGMLLLRGQT…TPGDVGLVTS (68 aa)) the chain is Extracellular.

Belongs to the DHHC palmitoyltransferase family.

It localises to the membrane. The catalysed reaction is L-cysteinyl-[protein] + hexadecanoyl-CoA = S-hexadecanoyl-L-cysteinyl-[protein] + CoA. Its function is as follows. Probable palmitoyltransferase that could catalyze the addition of palmitate onto various protein substrates. This Mus musculus (Mouse) protein is Probable palmitoyltransferase ZDHHC24.